Here is a 270-residue protein sequence, read N- to C-terminus: MGKSSKDKRDIYYRKAKEEGWRARSAFKLIQIDEEYQIFEGVKRVVDLCAAPGSWSQVLSRRIYGDGKDPDVKIVAVDLQEMAPLKGVVQIKGDITKYETSKQIISHFDGSLADLIISDGAPDVTGLHDIDFYGQSQLILSALNITTHTLKIGGTFVAKMFKGDDMSLMYSQMKLFFEHVSFVKPSSSRESSLENFILCRNYQPPLNYNPKIIDPALENHNKILNNNNNNSNNNNNCNIDNENDNEFLKTDSLIVPFIACGDLNLGYHLV.

S-adenosyl-L-methionine is bound by residues Gly-53, Trp-55, Asp-78, Asp-94, and Asp-119. The active-site Proton acceptor is Lys-159.

This sequence belongs to the class I-like SAM-binding methyltransferase superfamily. RNA methyltransferase RlmE family. TRM7 subfamily.

It localises to the cytoplasm. It catalyses the reaction cytidine(32)/guanosine(34) in tRNA + 2 S-adenosyl-L-methionine = 2'-O-methylcytidine(32)/2'-O-methylguanosine(34) in tRNA + 2 S-adenosyl-L-homocysteine + 2 H(+). In terms of biological role, methylates the 2'-O-ribose of nucleotides at positions 32 and 34 of the tRNA anticodon loop of substrate tRNAs. The chain is Putative tRNA (cytidine(32)/guanosine(34)-2'-O)-methyltransferase (fsjA) from Dictyostelium discoideum (Social amoeba).